A 644-amino-acid chain; its full sequence is Exoribonuclease 2 (644 aa).

The RNB domain maps to Arg189–Lys516. The S1 motif domain maps to Asp561–Val643.

It belongs to the RNR ribonuclease family. RNase II subfamily.

It is found in the cytoplasm. The enzyme catalyses Exonucleolytic cleavage in the 3'- to 5'-direction to yield nucleoside 5'-phosphates.. In terms of biological role, involved in mRNA degradation. Hydrolyzes single-stranded polyribonucleotides processively in the 3' to 5' direction. This is Exoribonuclease 2 from Enterobacter sp. (strain 638).